A 370-amino-acid polypeptide reads, in one-letter code: MSGNFLALAQPGVQQLSPYVPGKPVDELARELDLDPASIVKLASNENPLGASPKALAAIREALDELTRYPDGNGFALKSLLAEQCRVELNQVTLGNGSNDILELVARAYLAPGLNAVFSEHAFAVYPIATQAVGAQAKVVPAKEWGHDLPAMLAAIDANTRVVFIANPNNPTGTWFGAEALDDFLQDVPEHVLVVLDEAYIEYAEGSDLPDGLDFLAAYPNLLVSRTFSKAYGLAALRVGYGLSTPVVADVLNRVRQPFNVNSLALAAACAALKDEEYLAQSRQLNESGMQQLEAGFRELGLSWIPSKGNFICVDLGQVAAPVFQGLLREGVIVRPVANYGMPNHLRVTIGLPAENSRFLEALRKVLARG.

The residue at position 230 (Lys-230) is an N6-(pyridoxal phosphate)lysine.

This sequence belongs to the class-II pyridoxal-phosphate-dependent aminotransferase family. Histidinol-phosphate aminotransferase subfamily. Homodimer. Requires pyridoxal 5'-phosphate as cofactor.

The enzyme catalyses L-histidinol phosphate + 2-oxoglutarate = 3-(imidazol-4-yl)-2-oxopropyl phosphate + L-glutamate. The protein operates within amino-acid biosynthesis; L-histidine biosynthesis; L-histidine from 5-phospho-alpha-D-ribose 1-diphosphate: step 7/9. This chain is Histidinol-phosphate aminotransferase 2, found in Pseudomonas fluorescens (strain Pf0-1).